Consider the following 202-residue polypeptide: Large ribosomal subunit protein mL40 (202 aa).

The tract at residues 42–79 (IQHQQTASYASKGKSGPPAGMFSGQKAGSKKSKGPKQV) is disordered.

It belongs to the mitochondrion-specific ribosomal protein mL40 family. As to quaternary structure, component of the mitochondrial large ribosomal subunit (mt-LSU). Mature N.crassa 74S mitochondrial ribosomes consist of a small (37S) and a large (54S) subunit. The 37S small subunit contains a 16S ribosomal RNA (16S mt-rRNA) and 32 different proteins. The 54S large subunit contains a 23S rRNA (23S mt-rRNA) and 42 different proteins. mL40 is binding to NAD.

The protein resides in the mitochondrion. Component of the mitochondrial ribosome (mitoribosome), a dedicated translation machinery responsible for the synthesis of mitochondrial genome-encoded proteins, including at least some of the essential transmembrane subunits of the mitochondrial respiratory chain. The mitoribosomes are attached to the mitochondrial inner membrane and translation products are cotranslationally integrated into the membrane. This Neurospora crassa (strain ATCC 24698 / 74-OR23-1A / CBS 708.71 / DSM 1257 / FGSC 987) protein is Large ribosomal subunit protein mL40 (mrpl28).